The chain runs to 94 residues: Acylphosphatase (94 aa).

In terms of domain architecture, Acylphosphatase-like spans 8–94; that stretch reads RFTARVVGRV…QGDLADFRRK (87 aa). Catalysis depends on residues Arg-23 and Asn-41.

This sequence belongs to the acylphosphatase family.

The enzyme catalyses an acyl phosphate + H2O = a carboxylate + phosphate + H(+). This chain is Acylphosphatase (acyP), found in Frankia alni (strain DSM 45986 / CECT 9034 / ACN14a).